The following is a 136-amino-acid chain: uncharacterized protein (136 aa).

Its subcellular location is the mitochondrion. This is an uncharacterized protein from Arabidopsis thaliana (Mouse-ear cress).